Here is a 190-residue protein sequence, read N- to C-terminus: E3 ubiquitin-protein ligase RNF183 (190 aa).

Residues 1–159 are Cytoplasmic-facing; the sequence is MSEPQGQELR…RECVRNPHFR (159 aa). Residues 13–60 form an RING-type zinc finger; it reads CPVCWNPFNNTFHTPKVLDCCHSFCVECLAHLSLVTPARRRLLCPLCR. Residues 160–180 form a helical; Anchor for type IV membrane protein membrane-spanning segment; the sequence is IFAYLMAVILSVTLLLIFSIF. The Lumenal portion of the chain corresponds to 181–190; sequence WTKQFFWGMG.

Interacts with FATE1. Interacts with SEC16A. Interacts with BCL2L1. Autoubiquitinated (in vitro). In terms of tissue distribution, highly expressed in the kidney and testis.

The protein resides in the endoplasmic reticulum membrane. The protein localises to the endoplasmic reticulum. It localises to the golgi apparatus. Its subcellular location is the cis-Golgi network membrane. It is found in the lysosome membrane. The catalysed reaction is S-ubiquitinyl-[E2 ubiquitin-conjugating enzyme]-L-cysteine + [acceptor protein]-L-lysine = [E2 ubiquitin-conjugating enzyme]-L-cysteine + N(6)-ubiquitinyl-[acceptor protein]-L-lysine.. It participates in protein modification; protein ubiquitination. Acts as an E3 ubiquitin ligase catalyzing the covalent attachment of ubiquitin moieties onto substrate proteins. Triggers apoptosis in response to prolonged ER stress by mediating the polyubiquitination and subsequent proteasomal degradation of BCL2L1. May collaborate with FATE1 to restrain BIK protein levels thus regulating apoptotic signaling. In Mus musculus (Mouse), this protein is E3 ubiquitin-protein ligase RNF183 (Rnf183).